Here is a 369-residue protein sequence, read N- to C-terminus: Molybdenum import ATP-binding protein ModC 1 (369 aa).

Residues 10–240 form the ABC transporter domain; it reads KGYIEVAFNG…PALASRSEAA (231 aa). Residue 42 to 49 participates in ATP binding; it reads GPPGCGKT. Residues 297-367 form the Mop domain; the sequence is ASSILNVFRA…ELCGKLGDDG (71 aa).

This sequence belongs to the ABC transporter superfamily. Molybdate importer (TC 3.A.1.8) family. In terms of assembly, the complex is composed of two ATP-binding proteins (ModC), two transmembrane proteins (ModB) and a solute-binding protein (ModA).

The protein resides in the cell inner membrane. It catalyses the reaction molybdate(out) + ATP + H2O = molybdate(in) + ADP + phosphate + H(+). Functionally, part of the ABC transporter complex ModABC involved in molybdenum import. Responsible for energy coupling to the transport system. In Bradyrhizobium diazoefficiens (strain JCM 10833 / BCRC 13528 / IAM 13628 / NBRC 14792 / USDA 110), this protein is Molybdenum import ATP-binding protein ModC 1.